A 293-amino-acid polypeptide reads, in one-letter code: Elongation factor Ts (293 aa).

The tract at residues T80–V83 is involved in Mg(2+) ion dislocation from EF-Tu.

This sequence belongs to the EF-Ts family.

The protein localises to the cytoplasm. In terms of biological role, associates with the EF-Tu.GDP complex and induces the exchange of GDP to GTP. It remains bound to the aminoacyl-tRNA.EF-Tu.GTP complex up to the GTP hydrolysis stage on the ribosome. The chain is Elongation factor Ts from Janthinobacterium sp. (strain Marseille) (Minibacterium massiliensis).